The primary structure comprises 1028 residues: Isoleucine--tRNA ligase (1028 aa).

The short motif at 51-61 (PTANGRPHIGH) is the 'HIGH' region element. The 'KMSKS' region signature appears at 591 to 595 (KMSKS). K594 is a binding site for ATP.

The protein belongs to the class-I aminoacyl-tRNA synthetase family. IleS type 2 subfamily. As to quaternary structure, monomer. Zn(2+) is required as a cofactor.

Its subcellular location is the cytoplasm. It carries out the reaction tRNA(Ile) + L-isoleucine + ATP = L-isoleucyl-tRNA(Ile) + AMP + diphosphate. Its function is as follows. Catalyzes the attachment of isoleucine to tRNA(Ile). As IleRS can inadvertently accommodate and process structurally similar amino acids such as valine, to avoid such errors it has two additional distinct tRNA(Ile)-dependent editing activities. One activity is designated as 'pretransfer' editing and involves the hydrolysis of activated Val-AMP. The other activity is designated 'posttransfer' editing and involves deacylation of mischarged Val-tRNA(Ile). The protein is Isoleucine--tRNA ligase of Thermoplasma volcanium (strain ATCC 51530 / DSM 4299 / JCM 9571 / NBRC 15438 / GSS1).